A 127-amino-acid polypeptide reads, in one-letter code: Small ribosomal subunit protein uS11 (127 aa).

This sequence belongs to the universal ribosomal protein uS11 family. In terms of assembly, part of the 30S ribosomal subunit. Interacts with proteins S7 and S18. Binds to IF-3.

Its function is as follows. Located on the platform of the 30S subunit, it bridges several disparate RNA helices of the 16S rRNA. Forms part of the Shine-Dalgarno cleft in the 70S ribosome. This chain is Small ribosomal subunit protein uS11, found in Pelodictyon phaeoclathratiforme (strain DSM 5477 / BU-1).